Reading from the N-terminus, the 196-residue chain is dTTP/UTP pyrophosphatase (196 aa).

Asp-75 acts as the Proton acceptor in catalysis.

It belongs to the Maf family. YhdE subfamily. A divalent metal cation serves as cofactor.

The protein localises to the cytoplasm. The enzyme catalyses dTTP + H2O = dTMP + diphosphate + H(+). The catalysed reaction is UTP + H2O = UMP + diphosphate + H(+). Its function is as follows. Nucleoside triphosphate pyrophosphatase that hydrolyzes dTTP and UTP. May have a dual role in cell division arrest and in preventing the incorporation of modified nucleotides into cellular nucleic acids. The chain is dTTP/UTP pyrophosphatase from Wolbachia pipientis subsp. Culex pipiens (strain wPip).